The chain runs to 83 residues: MRKGTVKEVLAKIKYDPRENEEDYYIIIEHRGSYGNVRKIPVRIIELGHGYFFIGETQIPYHRILKVVRKDGKVVWESRKIRK.

The protein belongs to the UPF0248 family.

The sequence is that of UPF0248 protein PYRAB10580 from Pyrococcus abyssi (strain GE5 / Orsay).